Reading from the N-terminus, the 84-residue chain is U4-theraphotoxin-Hhn1a (84 aa).

Positions 1-22 (MKVTLIAILTCAAVLVLHTTAA) are cleaved as a signal peptide. The propeptide occupies 23 to 47 (EELEESQLMEVGMPDTELAAVDEER). 3 disulfide bridges follow: cysteine 51/cysteine 65, cysteine 55/cysteine 76, and cysteine 70/cysteine 81.

This sequence belongs to the neurotoxin 12 (Hwtx-2) family. 02 (Hwtx-2) subfamily. In terms of tissue distribution, expressed by the venom gland.

The protein localises to the secreted. In terms of biological role, postsynaptic neurotoxin. The protein is U4-theraphotoxin-Hhn1a of Cyriopagopus hainanus (Chinese bird spider).